Reading from the N-terminus, the 474-residue chain is Trehalose-6-phosphate synthase (474 aa).

Arginine 10 is a D-glucose 6-phosphate binding site. Residue 22–23 coordinates UDP-alpha-D-glucose; that stretch reads GG. D-glucose 6-phosphate contacts are provided by tyrosine 77 and aspartate 131. Arginine 263 and lysine 268 together coordinate UDP-alpha-D-glucose. Arginine 301 serves as a coordination point for D-glucose 6-phosphate. Residues phenylalanine 340 and 366–370 each bind UDP-alpha-D-glucose; that span reads LVAKE.

It belongs to the glycosyltransferase 20 family. As to quaternary structure, homotetramer.

It carries out the reaction D-glucose 6-phosphate + UDP-alpha-D-glucose = alpha,alpha-trehalose 6-phosphate + UDP + H(+). Its pathway is glycan biosynthesis; trehalose biosynthesis. Functionally, probably involved in the osmoprotection via the biosynthesis of trehalose. Catalyzes the transfer of glucose from UDP-alpha-D-glucose (UDP-Glc) to D-glucose 6-phosphate (Glc-6-P) to form trehalose-6-phosphate. Acts with retention of the anomeric configuration of the UDP-sugar donor. The sequence is that of Trehalose-6-phosphate synthase from Escherichia coli O157:H7.